The primary structure comprises 597 residues: NADH-quinone oxidoreductase subunit C/D (597 aa).

The interval 1–188 (MKKEIKRDDV…DPYVLNKYKE (188 aa)) is NADH dehydrogenase I subunit C. The tract at residues 211–597 (KYMFLNLGPN…IDFVMSDVDR (387 aa)) is NADH dehydrogenase I subunit D.

This sequence in the N-terminal section; belongs to the complex I 30 kDa subunit family. The protein in the C-terminal section; belongs to the complex I 49 kDa subunit family. In terms of assembly, NDH-1 is composed of 13 different subunits. Subunits NuoB, CD, E, F, and G constitute the peripheral sector of the complex.

Its subcellular location is the cell inner membrane. It catalyses the reaction a quinone + NADH + 5 H(+)(in) = a quinol + NAD(+) + 4 H(+)(out). Its function is as follows. NDH-1 shuttles electrons from NADH, via FMN and iron-sulfur (Fe-S) centers, to quinones in the respiratory chain. The immediate electron acceptor for the enzyme in this species is believed to be ubiquinone. Couples the redox reaction to proton translocation (for every two electrons transferred, four hydrogen ions are translocated across the cytoplasmic membrane), and thus conserves the redox energy in a proton gradient. The sequence is that of NADH-quinone oxidoreductase subunit C/D from Buchnera aphidicola subsp. Baizongia pistaciae (strain Bp).